The following is a 268-amino-acid chain: Tryptophan synthase alpha chain (268 aa).

Residues glutamate 49 and aspartate 60 each act as proton acceptor in the active site.

It belongs to the TrpA family. In terms of assembly, tetramer of two alpha and two beta chains.

It carries out the reaction (1S,2R)-1-C-(indol-3-yl)glycerol 3-phosphate + L-serine = D-glyceraldehyde 3-phosphate + L-tryptophan + H2O. It participates in amino-acid biosynthesis; L-tryptophan biosynthesis; L-tryptophan from chorismate: step 5/5. In terms of biological role, the alpha subunit is responsible for the aldol cleavage of indoleglycerol phosphate to indole and glyceraldehyde 3-phosphate. The chain is Tryptophan synthase alpha chain from Salmonella typhimurium (strain LT2 / SGSC1412 / ATCC 700720).